Here is a 346-residue protein sequence, read N- to C-terminus: 3-keto-steroid reductase ERG27 (346 aa).

NADP(+) is bound by residues leucine 19, threonine 42, and lysine 48. Active-site proton donor residues include serine 182 and tyrosine 205. Residues tyrosine 205, lysine 209, and serine 241 each contribute to the NADP(+) site. Lysine 209 acts as the Lowers pKa of active site Tyr in catalysis. Residues 242–262 (FSFFQYLNVFTYYGMLFLFYL) form a helical membrane-spanning segment. Asparagine 272 carries an N-linked (GlcNAc...) asparagine glycan.

The protein belongs to the short-chain dehydrogenases/reductases (SDR) family. ERG27 subfamily. In terms of assembly, heterotetramer of ERG25, ERG26, ERG27 and ERG28. ERG28 acts as a scaffold to tether ERG27 and other 4,4-demethylation-related enzymes, forming a demethylation enzyme complex, in the endoplasmic reticulum. Interacts with ERG25 and ERG28. Also interacts with ERG7, but only in lipid particles.

It localises to the endoplasmic reticulum membrane. Its subcellular location is the lipid droplet. The enzyme catalyses 3-dehydro-4alpha-methylzymosterol + NADPH + H(+) = 4alpha-methylzymosterol + NADP(+). Its pathway is steroid biosynthesis; zymosterol biosynthesis; zymosterol from lanosterol: step 5/6. Functionally, 3-keto-steroid reductase; part of the third module of ergosterol biosynthesis pathway that includes the late steps of the pathway. ERG27 is a catalytic component of the C-4 demethylation complex that catalyzes the reduction of the keto group on the C-3. The third module or late pathway involves the ergosterol synthesis itself through consecutive reactions that mainly occur in the endoplasmic reticulum (ER) membrane. Firstly, the squalene synthase ERG9 catalyzes the condensation of 2 farnesyl pyrophosphate moieties to form squalene, which is the precursor of all steroids. Squalene synthase is crucial for balancing the incorporation of farnesyl diphosphate (FPP) into sterol and nonsterol isoprene synthesis. Secondly, the squalene epoxidase ERG1 catalyzes the stereospecific oxidation of squalene to (S)-2,3-epoxysqualene, which is considered to be a rate-limiting enzyme in steroid biosynthesis. Then, the lanosterol synthase ERG7 catalyzes the cyclization of (S)-2,3 oxidosqualene to lanosterol, a reaction that forms the sterol core. In the next steps, lanosterol is transformed to zymosterol through a complex process involving various demethylation, reduction and desaturation reactions. The lanosterol 14-alpha-demethylase ERG11 (also known as CYP51) catalyzes C14-demethylation of lanosterol to produce 4,4'-dimethyl cholesta-8,14,24-triene-3-beta-ol, which is critical for ergosterol biosynthesis. The C-14 reductase ERG24 reduces the C14=C15 double bond of 4,4-dimethyl-cholesta-8,14,24-trienol to produce 4,4-dimethyl-cholesta-8,24-dienol. 4,4-dimethyl-cholesta-8,24-dienol is substrate of the C-4 demethylation complex ERG25-ERG26-ERG27 in which ERG25 catalyzes the three-step monooxygenation required for the demethylation of 4,4-dimethyl and 4alpha-methylsterols, ERG26 catalyzes the oxidative decarboxylation that results in a reduction of the 3-beta-hydroxy group at the C-3 carbon to an oxo group, and ERG27 is responsible for the reduction of the keto group on the C-3. ERG28 has a role as a scaffold to help anchor ERG25, ERG26 and ERG27 to the endoplasmic reticulum and ERG29 regulates the activity of the iron-containing C4-methylsterol oxidase ERG25. Then, the sterol 24-C-methyltransferase ERG6 catalyzes the methyl transfer from S-adenosyl-methionine to the C-24 of zymosterol to form fecosterol. The C-8 sterol isomerase ERG2 catalyzes the reaction which results in unsaturation at C-7 in the B ring of sterols and thus converts fecosterol to episterol. The sterol-C5-desaturase ERG3 then catalyzes the introduction of a C-5 double bond in the B ring to produce 5-dehydroepisterol. The C-22 sterol desaturase ERG5 further converts 5-dehydroepisterol into ergosta-5,7,22,24(28)-tetraen-3beta-ol by forming the C-22(23) double bond in the sterol side chain. Finally, ergosta-5,7,22,24(28)-tetraen-3beta-ol is substrate of the C-24(28) sterol reductase ERG4 to produce ergosterol. Facilitates the association of ERG7 with lipid particles preventing its digestion in the endoplasmic reticulum and the lipid particles. This is 3-keto-steroid reductase ERG27 from Candida albicans (Yeast).